Consider the following 100-residue polypeptide: Small ribosomal subunit protein uS17 (100 aa).

The protein belongs to the universal ribosomal protein uS17 family. Part of the 30S ribosomal subunit.

Its function is as follows. One of the primary rRNA binding proteins, it binds specifically to the 5'-end of 16S ribosomal RNA. This is Small ribosomal subunit protein uS17 from Fervidobacterium nodosum (strain ATCC 35602 / DSM 5306 / Rt17-B1).